A 282-amino-acid chain; its full sequence is Pantothenate synthetase (282 aa).

ATP is bound at residue 26 to 33 (MGNLHDGH). H33 (proton donor) is an active-site residue. Q57 provides a ligand contact to (R)-pantoate. Q57 contacts beta-alanine. 148–151 (GKKD) is an ATP binding site. Q154 serves as a coordination point for (R)-pantoate. Position 185-188 (185-188 (LSSR)) interacts with ATP.

Belongs to the pantothenate synthetase family. As to quaternary structure, homodimer.

Its subcellular location is the cytoplasm. The enzyme catalyses (R)-pantoate + beta-alanine + ATP = (R)-pantothenate + AMP + diphosphate + H(+). It functions in the pathway cofactor biosynthesis; (R)-pantothenate biosynthesis; (R)-pantothenate from (R)-pantoate and beta-alanine: step 1/1. Functionally, catalyzes the condensation of pantoate with beta-alanine in an ATP-dependent reaction via a pantoyl-adenylate intermediate. The protein is Pantothenate synthetase of Polaromonas sp. (strain JS666 / ATCC BAA-500).